The chain runs to 430 residues: Glutamate-1-semialdehyde 2,1-aminomutase (430 aa).

Residue K268 is modified to N6-(pyridoxal phosphate)lysine.

The protein belongs to the class-III pyridoxal-phosphate-dependent aminotransferase family. HemL subfamily. The cofactor is pyridoxal 5'-phosphate.

It is found in the cytoplasm. The catalysed reaction is (S)-4-amino-5-oxopentanoate = 5-aminolevulinate. The protein operates within porphyrin-containing compound metabolism; protoporphyrin-IX biosynthesis; 5-aminolevulinate from L-glutamyl-tRNA(Glu): step 2/2. The sequence is that of Glutamate-1-semialdehyde 2,1-aminomutase from Methanopyrus kandleri (strain AV19 / DSM 6324 / JCM 9639 / NBRC 100938).